The following is a 275-amino-acid chain: 2,3,4,5-tetrahydropyridine-2,6-dicarboxylate N-succinyltransferase (275 aa).

Residues Arg-106 and Asp-143 each coordinate substrate.

This sequence belongs to the transferase hexapeptide repeat family. As to quaternary structure, homotrimer.

The protein localises to the cytoplasm. It catalyses the reaction (S)-2,3,4,5-tetrahydrodipicolinate + succinyl-CoA + H2O = (S)-2-succinylamino-6-oxoheptanedioate + CoA. The protein operates within amino-acid biosynthesis; L-lysine biosynthesis via DAP pathway; LL-2,6-diaminopimelate from (S)-tetrahydrodipicolinate (succinylase route): step 1/3. The chain is 2,3,4,5-tetrahydropyridine-2,6-dicarboxylate N-succinyltransferase from Cupriavidus pinatubonensis (strain JMP 134 / LMG 1197) (Cupriavidus necator (strain JMP 134)).